We begin with the raw amino-acid sequence, 221 residues long: uncharacterized protein (221 aa).

Residues M1–Q30 form the signal peptide.

It is found in the virion. This is an uncharacterized protein from Acanthamoeba polyphaga mimivirus (APMV).